The following is a 379-amino-acid chain: MTSYNPASPDFPFTLGIEEEYQVVDPQTRELRSYITQILDRGKMILREQIKPELHQSMVEVGTHPCRTIQEARAEVVRLRSIIAGLARQHGLTIISAGTHPISSWMSQEITPFERYKGVVEEMQQLALQLLIFGMHVHVGMPDDEVAIELMNVARYFLPHILALSTSSPFWMGRNTGFKSYRSALFANFPRTGIPPSFHSAAEFHNYVNLLIRTNCIDDAKKIYWDLRPHPYFGTLEFRVCDAATRVDECIALAALMQALTVKLHLMFSENTTFRVYRRAVIMENKWRAQRWGLDGKLIDFGKRAEVDARALMYELVAFVDEVLDELGSRQEVEYLLKIAEGGSSADRQLAVFRETNDLNAVVDNLIVETLEGVPAYQA.

This sequence belongs to the glutamate--cysteine ligase type 2 family. YbdK subfamily.

It catalyses the reaction L-cysteine + L-glutamate + ATP = gamma-L-glutamyl-L-cysteine + ADP + phosphate + H(+). Functionally, ATP-dependent carboxylate-amine ligase which exhibits weak glutamate--cysteine ligase activity. The polypeptide is Putative glutamate--cysteine ligase 2 (Roseiflexus sp. (strain RS-1)).